Consider the following 1034-residue polypeptide: Receptor-type guanylate cyclase gcy-25 (1034 aa).

The first 16 residues, 1–16 (MLLLLLLLKISTFVDS), serve as a signal peptide directing secretion. Over 17–409 (FQIGHLEFEN…YDNNLCSDFH (393 aa)) the chain is Extracellular. N-linked (GlcNAc...) asparagine glycosylation is found at N28, N224, N301, N308, and N373. Residues 410-430 (VFMIAAIVFSILLIPMAIAFY) traverse the membrane as a helical segment. Residues 431 to 1034 (LQRKEHLIQQ…DNSKKMFLNV (604 aa)) are Cytoplasmic-facing. The Protein kinase domain occupies 464 to 749 (RVSTISTARA…KITDAVNREF (286 aa)). ATP is bound by residues 470 to 478 (TARASYSSI) and K497. The stretch at 758 to 785 (IDQMIEMIDEYSANLEQIVAERTRELEQ) forms a coiled coil. A Guanylate cyclase domain is found at 821–951 (TLLVVDVCQF…DTVNMACRMA (131 aa)).

It belongs to the adenylyl cyclase class-4/guanylyl cyclase family. In terms of tissue distribution, expressed in AQR, PQR and URX sensory neurons.

The protein resides in the cell membrane. The catalysed reaction is GTP = 3',5'-cyclic GMP + diphosphate. Functionally, guanylate cyclase involved in the production of the second messenger cGMP. The sequence is that of Receptor-type guanylate cyclase gcy-25 from Caenorhabditis elegans.